A 262-amino-acid polypeptide reads, in one-letter code: MPDSPTDLRSAFRSGRVTPTAGLAPGFAQTNLIAVPQDWAYDVLLFTQRNPKPCPVLDVGDAGSRTTMLAPGADITTDLPLYRVWKDGELADETADVSSLWRDDLVAFHIGCSFTFEHPVAAAGVPLRHVEQGSNVPMYVTDRECRPAGRVSGPMVVSMRPVPEHQVSLAAAISARMPAVHGGPVHIGDPTELGIADLGAPDFGDPVNLEPGDVPMFWACGVTPQAAVMASRLPFAITHAPGYMLITDTPDSEYVLEVPDAR.

The protein belongs to the D-glutamate cyclase family.

The chain is Putative hydro-lyase ROP_32680 from Rhodococcus opacus (strain B4).